We begin with the raw amino-acid sequence, 65 residues long: Large ribosomal subunit protein bL35 (65 aa).

The segment at 1-26 (MPKIKTVRGAAKRFKKTASGGFKRKQ) is disordered. The segment covering 10–26 (AAKRFKKTASGGFKRKQ) has biased composition (basic residues).

It belongs to the bacterial ribosomal protein bL35 family.

The polypeptide is Large ribosomal subunit protein bL35 (Actinobacillus pleuropneumoniae serotype 7 (strain AP76)).